The primary structure comprises 507 residues: MTASIKIQPDIDSLKQLQQQNDDSSINMYPVYAYLPSLDLTPHVAYLKLAQLNNPDRKESFLLESAKTNNELDRYSFIGISPRKTIKTGPTEGIETDPLEILEKEMSTFKVAENVPGLPKLSGGAIGYISYDCVRYFEPKTRRPLKDVLRLPEAYLMLCDTIIAFDNVFQRFQIIHNINTNETSLEEGYQAAAQIITDIVSKLTDDSSPIPYPEQPPIKLNQTFESNVGKEGYENHVSTLKKHIKKGDIIQGVPSQRVARPTSLHPFNIYRHLRTVNPSPYLFYIDCLDFQIIGASPELLCKSDSKNRVITHPIAGTVKRGATTEEDDALADQLRGSLKDRAEHVMLVDLARNDINRICDPLTTSVDKLLTIQKFSHVQHLVSQVSGVLRPEKTRFDAFRSIFPAGTVSGAPKVRAMELIAELEGERRGVYAGAVGHWSYDGKTMDNCIALRTMVYKDGIAYLQAGGGIVYDSDEYDEYVETMNKMMANHSTIVQAEELWADIVGSA.

Residue Ser65 coordinates L-tryptophan. Ser81 carries the phosphoserine modification. A Phosphothreonine modification is found at Thr223. Residue 280 to 282 (PYL) participates in L-tryptophan binding. Residue 316–317 (GT) participates in chorismate binding. Glu343 provides a ligand contact to Mg(2+). Residues Tyr431, Arg452, 466 to 468 (GGG), and Gly468 contribute to the chorismate site. Glu481 is a Mg(2+) binding site.

Belongs to the anthranilate synthase component I family. In terms of assembly, tetramer of two components I and two components II. Mg(2+) is required as a cofactor.

The catalysed reaction is chorismate + L-glutamine = anthranilate + pyruvate + L-glutamate + H(+). It functions in the pathway amino-acid biosynthesis; L-tryptophan biosynthesis; L-tryptophan from chorismate: step 1/5. This is Anthranilate synthase component 1 (TRP2) from Saccharomyces cerevisiae (strain ATCC 204508 / S288c) (Baker's yeast).